The following is a 63-amino-acid chain: MNFYNIFVFVALILAITIGQSEAGWLKKIGKKIERVGQHTRDATIQGLGIAQQAANVAATARG.

An N-terminal signal peptide occupies residues 1–23 (MNFYNIFVFVALILAITIGQSEA). The residue at position 62 (R62) is an Arginine amide.

Belongs to the cecropin family. Strongly expressed in larval, pupal and adult fat body and hemocytes after injection of bacteria. Maximal expression in the adult involves fat body cells of the head, thorax and abdomen.

The protein resides in the secreted. Functionally, cecropins have lytic and antibacterial activity against several Gram-positive and Gram-negative bacteria. The chain is Cecropin-A2 from Drosophila melanogaster (Fruit fly).